Reading from the N-terminus, the 498-residue chain is MEKYILSIDQGTTSSRAILFNQKGEIAGVAQREFKQYFPQSGWVEHDANEIWTSVLAVMTEVINENDVRADQIAGIGITNQRETTVVWDKHTGRPIYHAIVWQSRQTQSICSELKQQGYEQTFRDKTGLLLDPYFAGTKVKWILDNVEGAREKAENGGLLFGTIDTWLVWKLSGKAAHITDYSNASRTLMFNIHDLEWDDELLELLTVPKNMLPEVKPSSEVYGKTIDYHFYGQEVPIAGVAGDQQAALFGQACFERGDVKNTYGTGGFMLMNTGDKAVKSESGLLTTIAYGIDGKVNYALEGSIFVSGSAIQWLRDGLRMINSAPQSESYATRVDSTEGVYVVPAFVGLGTPYWDSEARGAIFGLTRGTEKEHFIRATLESLCYQTRDVMEAMSKDSGIDVQSLRVDGGAVKNNFIMQFQADIVNTSVERPEIQETTALGAAYLAGLAVGFWESKDDIAKNWKLEEKFDPKMDEGEREKLYRGWKKAVEATQVFKTE.

Threonine 12 is a binding site for ADP. ATP is bound by residues threonine 12, threonine 13, and serine 14. Threonine 12 is a binding site for sn-glycerol 3-phosphate. Arginine 16 contacts ADP. Sn-glycerol 3-phosphate contacts are provided by arginine 82, glutamate 83, and tyrosine 134. Glycerol contacts are provided by arginine 82, glutamate 83, and tyrosine 134. Histidine 230 carries the phosphohistidine; by HPr modification. Aspartate 244 lines the sn-glycerol 3-phosphate pocket. Positions 244 and 245 each coordinate glycerol. Residues threonine 266 and glycine 309 each coordinate ADP. 4 residues coordinate ATP: threonine 266, glycine 309, glutamine 313, and glycine 410. 2 residues coordinate ADP: glycine 410 and asparagine 414.

Belongs to the FGGY kinase family. In terms of assembly, homotetramer and homodimer (in equilibrium). In terms of processing, the phosphoenolpyruvate-dependent sugar phosphotransferase system (PTS), including enzyme I, and histidine-containing protein (HPr) are required for the phosphorylation, which leads to the activation of the enzyme.

It carries out the reaction glycerol + ATP = sn-glycerol 3-phosphate + ADP + H(+). It participates in polyol metabolism; glycerol degradation via glycerol kinase pathway; sn-glycerol 3-phosphate from glycerol: step 1/1. Its activity is regulated as follows. Activated by phosphorylation and inhibited by fructose 1,6-bisphosphate (FBP). Key enzyme in the regulation of glycerol uptake and metabolism. Catalyzes the phosphorylation of glycerol to yield sn-glycerol 3-phosphate. The polypeptide is Glycerol kinase (Staphylococcus aureus (strain bovine RF122 / ET3-1)).